Reading from the N-terminus, the 143-residue chain is Large ribosomal subunit protein uL16c (143 aa).

The protein belongs to the universal ribosomal protein uL16 family. Part of the 50S ribosomal subunit.

It localises to the plastid. The protein resides in the chloroplast. The sequence is that of Large ribosomal subunit protein uL16c from Cyanidioschyzon merolae (strain NIES-3377 / 10D) (Unicellular red alga).